The chain runs to 248 residues: Triosephosphate isomerase (248 aa).

Residues asparagine 10 and lysine 12 each coordinate D-glyceraldehyde 3-phosphate. Catalysis depends on histidine 95, which acts as the Electrophile. Glutamate 165 (proton acceptor) is an active-site residue. D-glyceraldehyde 3-phosphate is bound by residues glycine 171, leucine 230, and 232-233 (GN).

The protein belongs to the triosephosphate isomerase family. In terms of assembly, homodimer.

It carries out the reaction D-glyceraldehyde 3-phosphate = dihydroxyacetone phosphate. It functions in the pathway carbohydrate biosynthesis; gluconeogenesis. Its pathway is carbohydrate degradation; glycolysis; D-glyceraldehyde 3-phosphate from glycerone phosphate: step 1/1. Its function is as follows. Catalyzes the interconversion of glyceraldehyde 3-phosphate and dihydroxyacetone phosphate in the glycolytic and gluconeogenic pathways. The protein is Triosephosphate isomerase of Plasmodium falciparum (isolate 3D7).